The sequence spans 253 residues: Ubiquinone/menaquinone biosynthesis C-methyltransferase UbiE (253 aa).

Residues Thr76, Asp97, and Asn125 to Ala126 each bind S-adenosyl-L-methionine.

It belongs to the class I-like SAM-binding methyltransferase superfamily. MenG/UbiE family.

The catalysed reaction is a 2-demethylmenaquinol + S-adenosyl-L-methionine = a menaquinol + S-adenosyl-L-homocysteine + H(+). It carries out the reaction a 2-methoxy-6-(all-trans-polyprenyl)benzene-1,4-diol + S-adenosyl-L-methionine = a 5-methoxy-2-methyl-3-(all-trans-polyprenyl)benzene-1,4-diol + S-adenosyl-L-homocysteine + H(+). It functions in the pathway quinol/quinone metabolism; menaquinone biosynthesis; menaquinol from 1,4-dihydroxy-2-naphthoate: step 2/2. The protein operates within cofactor biosynthesis; ubiquinone biosynthesis. Its function is as follows. Methyltransferase required for the conversion of demethylmenaquinol (DMKH2) to menaquinol (MKH2) and the conversion of 2-polyprenyl-6-methoxy-1,4-benzoquinol (DDMQH2) to 2-polyprenyl-3-methyl-6-methoxy-1,4-benzoquinol (DMQH2). The chain is Ubiquinone/menaquinone biosynthesis C-methyltransferase UbiE from Nitrobacter hamburgensis (strain DSM 10229 / NCIMB 13809 / X14).